We begin with the raw amino-acid sequence, 77 residues long: Cell division topological specificity factor (77 aa).

The protein belongs to the MinE family.

In terms of biological role, prevents the cell division inhibition by proteins MinC and MinD at internal division sites while permitting inhibition at polar sites. This ensures cell division at the proper site by restricting the formation of a division septum at the midpoint of the long axis of the cell. The protein is Cell division topological specificity factor of Nautilia profundicola (strain ATCC BAA-1463 / DSM 18972 / AmH).